A 130-amino-acid chain; its full sequence is Small ribosomal subunit protein uS11 (130 aa).

The protein belongs to the universal ribosomal protein uS11 family. Part of the 30S ribosomal subunit. Interacts with proteins S7 and S18. Binds to IF-3.

In terms of biological role, located on the platform of the 30S subunit, it bridges several disparate RNA helices of the 16S rRNA. Forms part of the Shine-Dalgarno cleft in the 70S ribosome. This Xylella fastidiosa (strain M23) protein is Small ribosomal subunit protein uS11.